Here is a 461-residue protein sequence, read N- to C-terminus: Photosystem II CP43 reaction center protein (461 aa).

5 helical membrane-spanning segments follow: residues 57–81, 122–143, 166–188, 243–263, and 279–300; these read LFEVAHFVPEKPMYEQGIILLSHLA, LRGPESLEEYSTFFSQDWKDKN, KAMFFGGVYDTWAPGGGDVRIIS, KPFGWVRRAFIWNGEAYLSYS, and WYNNTVYPSEFFGPTAAEASQS. Glu355 contacts [CaMn4O5] cluster. The helical transmembrane segment at 435–459 threads the bilayer; sequence RARAAAAGFEKGIDRATEPVLAMRD.

This sequence belongs to the PsbB/PsbC family. PsbC subfamily. In terms of assembly, PSII is composed of 1 copy each of membrane proteins PsbA, PsbB, PsbC, PsbD, PsbE, PsbF, PsbH, PsbI, PsbJ, PsbK, PsbL, PsbM, PsbT, PsbX, PsbY, PsbZ, Psb30/Ycf12, peripheral proteins PsbO, CyanoQ (PsbQ), PsbU, PsbV and a large number of cofactors. It forms dimeric complexes. Binds multiple chlorophylls and provides some of the ligands for the Ca-4Mn-5O cluster of the oxygen-evolving complex. It may also provide a ligand for a Cl- that is required for oxygen evolution. PSII binds additional chlorophylls, carotenoids and specific lipids. is required as a cofactor.

It is found in the cellular thylakoid membrane. Functionally, one of the components of the core complex of photosystem II (PSII). It binds chlorophyll and helps catalyze the primary light-induced photochemical processes of PSII. PSII is a light-driven water:plastoquinone oxidoreductase, using light energy to abstract electrons from H(2)O, generating O(2) and a proton gradient subsequently used for ATP formation. This chain is Photosystem II CP43 reaction center protein, found in Synechococcus elongatus (strain ATCC 33912 / PCC 7942 / FACHB-805) (Anacystis nidulans R2).